We begin with the raw amino-acid sequence, 187 residues long: Elongation factor P (187 aa).

Position 34 is an N6-(3,6-diaminohexanoyl)-5-hydroxylysine (K34).

The protein belongs to the elongation factor P family. Post-translationally, may be beta-lysylated on the epsilon-amino group of Lys-34 by the combined action of EpmA and EpmB, and then hydroxylated on the C5 position of the same residue by EpmC (if this protein is present). Lysylation is critical for the stimulatory effect of EF-P on peptide-bond formation. The lysylation moiety may extend toward the peptidyltransferase center and stabilize the terminal 3-CCA end of the tRNA. Hydroxylation of the C5 position on Lys-34 may allow additional potential stabilizing hydrogen-bond interactions with the P-tRNA.

The protein resides in the cytoplasm. Its pathway is protein biosynthesis; polypeptide chain elongation. Involved in peptide bond synthesis. Alleviates ribosome stalling that occurs when 3 or more consecutive Pro residues or the sequence PPG is present in a protein, possibly by augmenting the peptidyl transferase activity of the ribosome. Modification of Lys-34 is required for alleviation. This chain is Elongation factor P, found in Thioalkalivibrio sulfidiphilus (strain HL-EbGR7).